Consider the following 2183-residue polypeptide: Genome polyprotein (2183 aa).

A lipid anchor (N-myristoyl glycine; by host) is attached at Gly-2. Residues Gly-2–Gln-1493 are Cytoplasmic-facing. Residues Phe-566–Val-582 form an amphipathic alpha-helix region. Active-site for protease 2A activity residues include His-870 and Asp-888. Residues Cys-905 and Cys-907 each coordinate Zn(2+). Residue Cys-959 is the For protease 2A activity of the active site. Positions 965 and 967 each coordinate Zn(2+). The tract at residues Asn-1099–Gln-1171 is membrane-binding. The tract at residues Asn-1099–Thr-1237 is oligomerization. The segment at Ala-1120–Gln-1124 is RNA-binding. One can recognise an SF3 helicase domain in the interval Glu-1203–Asn-1359. Residues Cys-1367, Cys-1379, and Cys-1384 each contribute to the Zn(2+) site. Residues Cys-1367–Cys-1384 form a C4-type; degenerate zinc finger. Residues Glu-1411–Val-1418 form an RNA-binding region. Positions Leu-1422–Gln-1427 are oligomerization. An intramembrane segment occupies Ala-1494–Tyr-1509. Topologically, residues Lys-1510–Phe-2183 are cytoplasmic. The residue at position 1519 (Tyr-1519) is an O-(5'-phospho-RNA)-tyrosine. The 179-residue stretch at Gly-1539–Phe-1717 folds into the Peptidase C3 domain. Active-site for protease 3C activity residues include His-1578, Glu-1609, and Cys-1685. Residues Gly-1948–Leu-2064 form the RdRp catalytic domain. Mg(2+) is bound by residues Asp-1954 and Asp-2050.

Belongs to the picornaviruses polyprotein family. Interacts with capsid protein VP1 and capsid protein VP3 to form heterotrimeric protomers. As to quaternary structure, interacts with capsid protein VP0, and capsid protein VP3 to form heterotrimeric protomers. Five protomers subsequently associate to form pentamers which serve as building blocks for the capsid. Interacts with capsid protein VP2, capsid protein VP3 and capsid protein VP4 following cleavage of capsid protein VP0. Interacts with host CXADR. In terms of assembly, interacts with capsid protein VP1 and capsid protein VP3 in the mature capsid. Interacts with capsid protein VP0 and capsid protein VP1 to form heterotrimeric protomers. Five protomers subsequently associate to form pentamers which serve as building blocks for the capsid. Interacts with capsid protein VP4 in the mature capsid. Interacts with protein 2C; this interaction may be important for virion morphogenesis. As to quaternary structure, interacts with capsid protein VP1 and capsid protein VP3. In terms of assembly, homodimer. Homohexamer; forms a hexameric ring structure with 6-fold symmetry characteristic of AAA+ ATPases. Interacts (via N-terminus) with host RTN3 (via reticulon domain); this interaction is important for viral replication. Interacts with capsid protein VP3; this interaction may be important for virion morphogenesis. As to quaternary structure, interacts with protein 3CD. In terms of assembly, homodimer. Interacts with host GBF1. Interacts (via GOLD domain) with host ACBD3 (via GOLD domain); this interaction allows the formation of a viral protein 3A/ACBD3 heterotetramer with a 2:2 stoichiometry, which will stimulate the recruitment of host PI4KB in order to synthesize PI4P at the viral RNA replication sites. Interacts with RNA-directed RNA polymerase. As to quaternary structure, interacts with protein 3AB and with RNA-directed RNA polymerase. In terms of assembly, interacts with Viral protein genome-linked and with protein 3CD. Mg(2+) serves as cofactor. Specific enzymatic cleavages in vivo by the viral proteases yield processing intermediates and the mature proteins. Post-translationally, myristoylation is required for the formation of pentamers during virus assembly. Further assembly of 12 pentamers and a molecule of genomic RNA generates the provirion. In terms of processing, during virion maturation, immature virions are rendered infectious following cleavage of VP0 into VP4 and VP2. This maturation seems to be an autocatalytic event triggered by the presence of RNA in the capsid and it is followed by a conformational change infectious virion. Myristoylation is required during RNA encapsidation and formation of the mature virus particle. Post-translationally, VPg is uridylylated by the polymerase into VPg-pUpU. This acts as a nucleotide-peptide primer for the genomic RNA replication.

Its subcellular location is the virion. It localises to the host cytoplasm. The protein resides in the host cytoplasmic vesicle membrane. The protein localises to the host nucleus. It catalyses the reaction a ribonucleoside 5'-triphosphate + H2O = a ribonucleoside 5'-diphosphate + phosphate + H(+). The catalysed reaction is Selective cleavage of Tyr-|-Gly bond in the picornavirus polyprotein.. It carries out the reaction RNA(n) + a ribonucleoside 5'-triphosphate = RNA(n+1) + diphosphate. The enzyme catalyses Selective cleavage of Gln-|-Gly bond in the poliovirus polyprotein. In other picornavirus reactions Glu may be substituted for Gln, and Ser or Thr for Gly.. With respect to regulation, replication or transcription is subject to high level of random mutations by the nucleotide analog ribavirin. Functionally, forms an icosahedral capsid of pseudo T=3 symmetry with capsid proteins VP2 and VP3. The capsid is 300 Angstroms in diameter, composed of 60 copies of each capsid protein and enclosing the viral positive strand RNA genome. Capsid protein VP1 mainly forms the vertices of the capsid. Capsid protein VP1 interacts with host CXADR to provide virion attachment to target host cells. This attachment induces virion internalization. Tyrosine kinases are probably involved in the entry process. After binding to its receptor, the capsid undergoes conformational changes. Capsid protein VP1 N-terminus (that contains an amphipathic alpha-helix) and capsid protein VP4 are externalized. Together, they shape a pore in the host membrane through which viral genome is translocated to host cell cytoplasm. Its function is as follows. Forms an icosahedral capsid of pseudo T=3 symmetry with capsid proteins VP2 and VP3. The capsid is 300 Angstroms in diameter, composed of 60 copies of each capsid protein and enclosing the viral positive strand RNA genome. Lies on the inner surface of the capsid shell. After binding to the host receptor, the capsid undergoes conformational changes. Capsid protein VP4 is released, Capsid protein VP1 N-terminus is externalized, and together, they shape a pore in the host membrane through which the viral genome is translocated into the host cell cytoplasm. In terms of biological role, component of immature procapsids, which is cleaved into capsid proteins VP4 and VP2 after maturation. Allows the capsid to remain inactive before the maturation step. Functionally, cysteine protease that cleaves viral polyprotein and specific host proteins. It is responsible for the autocatalytic cleavage between the P1 and P2 regions, which is the first cleavage occurring in the polyprotein. Also cleaves the host translation initiation factor EIF4G1, in order to shut down the capped cellular mRNA translation. Inhibits the host nucleus-cytoplasm protein and RNA trafficking by cleaving host members of the nuclear pores. Counteracts stress granule formation probably by antagonizing its assembly or promoting its dissassembly. Cleaves and inhibits host IFIH1/MDA5, thereby inhibiting the type-I IFN production and the establishment of the antiviral state. Cleaves and inhibits host MAVS, thereby inhibiting the type-I IFN production and the establishment of the antiviral state. Its function is as follows. Plays an essential role in the virus replication cycle by acting as a viroporin. Creates a pore in the host endoplasmic reticulum and as a consequence releases Ca2+ in the cytoplasm of infected cell. In turn, high levels of cytoplasmic calcium may trigger membrane trafficking and transport of viral ER-associated proteins to viroplasms, sites of viral genome replication. Induces and associates with structural rearrangements of intracellular membranes. Displays RNA-binding, nucleotide binding and NTPase activities. May play a role in virion morphogenesis and viral RNA encapsidation by interacting with the capsid protein VP3. In terms of biological role, localizes the viral replication complex to the surface of membranous vesicles. Together with protein 3CD binds the Cis-Active RNA Element (CRE) which is involved in RNA synthesis initiation. Acts as a cofactor to stimulate the activity of 3D polymerase, maybe through a nucleid acid chaperone activity. Functionally, localizes the viral replication complex to the surface of membranous vesicles. It inhibits host cell endoplasmic reticulum-to-Golgi apparatus transport and causes the disassembly of the Golgi complex, possibly through GBF1 interaction. This would result in depletion of MHC, trail receptors and IFN receptors at the host cell surface. Plays an essential role in viral RNA replication by recruiting ACBD3 and PI4KB at the viral replication sites, thereby allowing the formation of the rearranged membranous structures where viral replication takes place. Its function is as follows. Acts as a primer for viral RNA replication and remains covalently bound to viral genomic RNA. VPg is uridylylated prior to priming replication into VPg-pUpU. The oriI viral genomic sequence may act as a template for this. The VPg-pUpU is then used as primer on the genomic RNA poly(A) by the RNA-dependent RNA polymerase to replicate the viral genome. During genome replication, the VPg-RNA linkage is removed by the host TDP2, thereby accelerating replication. During the late stage of the replication cycle, host TDP2 is excluded from sites of viral RNA synthesis and encapsidation, allowing for the generation of progeny virions. Involved in the viral replication complex and viral polypeptide maturation. It exhibits protease activity with a specificity and catalytic efficiency that is different from protease 3C. Protein 3CD lacks polymerase activity. Protein 3CD binds to the 5'UTR of the viral genome. In terms of biological role, replicates the viral genomic RNA on the surface of intracellular membranes. May form linear arrays of subunits that propagate along a strong head-to-tail interaction called interface-I. Covalently attaches UMP to a tyrosine of VPg, which is used to prime RNA synthesis. The positive stranded RNA genome is first replicated at virus induced membranous vesicles, creating a dsRNA genomic replication form. This dsRNA is then used as template to synthesize positive stranded RNA genomes. ss(+)RNA genomes are either translated, replicated or encapsidated. Functionally, major viral protease that mediates proteolytic processing of the polyprotein. Cleaves host EIF5B, contributing to host translation shutoff. Also cleaves host PABPC1, contributing to host translation shutoff. Cleaves host NLRP1, triggers host N-glycine-mediated degradation of the autoinhibitory NLRP1 N-terminal fragment. The polypeptide is Genome polyprotein (Coxsackievirus B4 (strain JVB / Benschoten / New York/51)).